A 200-amino-acid polypeptide reads, in one-letter code: Cysteine dioxygenase type 1 (200 aa).

Fe cation contacts are provided by H86, H88, and H140. Positions C93–Y157 form a cross-link, 3'-(S-cysteinyl)-tyrosine (Cys-Tyr).

It belongs to the cysteine dioxygenase family. As to quaternary structure, monomer. The cofactor is Fe(2+). Ni(2+) serves as cofactor. It depends on Zn(2+) as a cofactor. Post-translationally, the thioether cross-link between Cys-93 and Tyr-157 plays a structural role through stabilizing the Fe(2+) ion, and prevents the production of highly damaging free hydroxyl radicals by holding the oxygen radical via hydroxyl hydrogen. As to expression, highly expressed in liver and placenta. Low expression in heart, brain and pancreas. Also detected in hepatoblastoma Hep-G2 cells.

It catalyses the reaction L-cysteine + O2 = 3-sulfino-L-alanine + H(+). Its pathway is organosulfur biosynthesis; taurine biosynthesis; hypotaurine from L-cysteine: step 1/2. In terms of biological role, catalyzes the oxidation of cysteine to cysteine sulfinic acid with addition of molecular dioxygen. The protein is Cysteine dioxygenase type 1 (CDO1) of Homo sapiens (Human).